A 160-amino-acid polypeptide reads, in one-letter code: Ureidoglycolate lyase (160 aa).

The protein belongs to the ureidoglycolate lyase family. As to quaternary structure, homodimer. It depends on Ni(2+) as a cofactor.

It carries out the reaction (S)-ureidoglycolate = urea + glyoxylate. It participates in nitrogen metabolism; (S)-allantoin degradation. Its function is as follows. Catalyzes the catabolism of the allantoin degradation intermediate (S)-ureidoglycolate, generating urea and glyoxylate. Involved in the anaerobic utilization of allantoin as sole nitrogen source. Reinforces the induction of genes involved in the degradation of allantoin and glyoxylate by producing glyoxylate. The polypeptide is Ureidoglycolate lyase (Escherichia coli (strain SMS-3-5 / SECEC)).